The chain runs to 387 residues: Succinate--CoA ligase [ADP-forming] subunit beta (387 aa).

Positions 9-244 constitute an ATP-grasp domain; the sequence is KQLFASYGLP…VSQEDDRENR (236 aa). Residues Lys-46, 53–55, Glu-99, Cys-102, and Glu-107 contribute to the ATP site; that span reads GRG. Residues Asn-199 and Asp-213 each coordinate Mg(2+). Substrate contacts are provided by residues Asn-264 and 321 to 323; that span reads GIV.

This sequence belongs to the succinate/malate CoA ligase beta subunit family. As to quaternary structure, heterotetramer of two alpha and two beta subunits. Requires Mg(2+) as cofactor.

The enzyme catalyses succinate + ATP + CoA = succinyl-CoA + ADP + phosphate. It catalyses the reaction GTP + succinate + CoA = succinyl-CoA + GDP + phosphate. It functions in the pathway carbohydrate metabolism; tricarboxylic acid cycle; succinate from succinyl-CoA (ligase route): step 1/1. Its function is as follows. Succinyl-CoA synthetase functions in the citric acid cycle (TCA), coupling the hydrolysis of succinyl-CoA to the synthesis of either ATP or GTP and thus represents the only step of substrate-level phosphorylation in the TCA. The beta subunit provides nucleotide specificity of the enzyme and binds the substrate succinate, while the binding sites for coenzyme A and phosphate are found in the alpha subunit. In Legionella pneumophila (strain Corby), this protein is Succinate--CoA ligase [ADP-forming] subunit beta.